The following is a 203-amino-acid chain: Pyridoxine/pyridoxamine 5'-phosphate oxidase (203 aa).

Residues R51–K56, Y66–T67, R72, K73, and Q95 each bind FMN. Residue K56 coordinates substrate. Y113, R117, and S121 together coordinate substrate. FMN-binding positions include Q130–S131 and W175. Position 181-183 (R181–H183) interacts with substrate. An FMN-binding site is contributed by R185.

The protein belongs to the pyridoxamine 5'-phosphate oxidase family. As to quaternary structure, homodimer. FMN is required as a cofactor.

The enzyme catalyses pyridoxamine 5'-phosphate + O2 + H2O = pyridoxal 5'-phosphate + H2O2 + NH4(+). The catalysed reaction is pyridoxine 5'-phosphate + O2 = pyridoxal 5'-phosphate + H2O2. It functions in the pathway cofactor metabolism; pyridoxal 5'-phosphate salvage; pyridoxal 5'-phosphate from pyridoxamine 5'-phosphate: step 1/1. It participates in cofactor metabolism; pyridoxal 5'-phosphate salvage; pyridoxal 5'-phosphate from pyridoxine 5'-phosphate: step 1/1. Its function is as follows. Catalyzes the oxidation of either pyridoxine 5'-phosphate (PNP) or pyridoxamine 5'-phosphate (PMP) into pyridoxal 5'-phosphate (PLP). The polypeptide is Pyridoxine/pyridoxamine 5'-phosphate oxidase (Novosphingobium aromaticivorans (strain ATCC 700278 / DSM 12444 / CCUG 56034 / CIP 105152 / NBRC 16084 / F199)).